The chain runs to 434 residues: Serine/threonine-protein kinase Sgk1-B (434 aa).

Positions 68–94 (ESELLNENSSPPPSHSQQINLGPSSNP) are disordered. In terms of domain architecture, Protein kinase spans 101-358 (FQFLKIIGKG…FMEIKNHIFF (258 aa)). ATP-binding positions include 107-115 (IGKGSFGKV) and K130. D225 acts as the Proton acceptor in catalysis. The 76-residue stretch at 359–434 (SPIDWDDLIN…SYAPPMDSYL (76 aa)) folds into the AGC-kinase C-terminal domain.

It belongs to the protein kinase superfamily. AGC Ser/Thr protein kinase family.

It localises to the cytoplasm. It is found in the nucleus. The protein localises to the endoplasmic reticulum. It catalyses the reaction L-seryl-[protein] + ATP = O-phospho-L-seryl-[protein] + ADP + H(+). It carries out the reaction L-threonyl-[protein] + ATP = O-phospho-L-threonyl-[protein] + ADP + H(+). In terms of biological role, protein kinase that may play an important role in cellular stress response. Plays an important role in activating certain potassium, sodium, and chloride channels, suggesting an involvement in the regulation of processes such as cell survival, neuronal excitability and renal sodium excretion. This is Serine/threonine-protein kinase Sgk1-B (sgk1-b) from Xenopus laevis (African clawed frog).